The following is a 177-amino-acid chain: Bifunctional protein PyrR (177 aa).

Positions 99–111 match the PRPP-binding motif; the sequence is VVLVDDVLFTGRT.

This sequence belongs to the purine/pyrimidine phosphoribosyltransferase family. PyrR subfamily.

The catalysed reaction is UMP + diphosphate = 5-phospho-alpha-D-ribose 1-diphosphate + uracil. In terms of biological role, regulates the transcription of the pyrimidine nucleotide (pyr) operon in response to exogenous pyrimidines. Functionally, also displays a weak uracil phosphoribosyltransferase activity which is not physiologically significant. This Citrifermentans bemidjiense (strain ATCC BAA-1014 / DSM 16622 / JCM 12645 / Bem) (Geobacter bemidjiensis) protein is Bifunctional protein PyrR.